Here is a 352-residue protein sequence, read N- to C-terminus: Anthranilate phosphoribosyltransferase (352 aa).

Residues Gly96, 99–100 (GS), Ser104, 106–109 (NIST), 124–132 (KHGNRSVSS), and Ser136 contribute to the 5-phospho-alpha-D-ribose 1-diphosphate site. Anthranilate is bound at residue Gly96. Ser108 is a Mg(2+) binding site. Asn127 contributes to the anthranilate binding site. An anthranilate-binding site is contributed by Arg182. Mg(2+)-binding residues include Asp241 and Glu242.

This sequence belongs to the anthranilate phosphoribosyltransferase family. As to quaternary structure, homodimer. Requires Mg(2+) as cofactor.

It carries out the reaction N-(5-phospho-beta-D-ribosyl)anthranilate + diphosphate = 5-phospho-alpha-D-ribose 1-diphosphate + anthranilate. Its pathway is amino-acid biosynthesis; L-tryptophan biosynthesis; L-tryptophan from chorismate: step 2/5. Catalyzes the transfer of the phosphoribosyl group of 5-phosphorylribose-1-pyrophosphate (PRPP) to anthranilate to yield N-(5'-phosphoribosyl)-anthranilate (PRA). This is Anthranilate phosphoribosyltransferase from Syntrophotalea carbinolica (strain DSM 2380 / NBRC 103641 / GraBd1) (Pelobacter carbinolicus).